The sequence spans 197 residues: Large ribosomal subunit protein mL58 (197 aa).

The transit peptide at 1-20 (MLFTIKPSFLKPVGFIQTRN) directs the protein to the mitochondrion.

The protein belongs to the mitochondrion-specific ribosomal protein mL58 family. In terms of assembly, component of the mitochondrial large ribosomal subunit (mt-LSU). Mature yeast 74S mitochondrial ribosomes consist of a small (37S) and a large (54S) subunit. The 37S small subunit contains a 15S ribosomal RNA (15S mt-rRNA) and at least 32 different proteins. The 54S large subunit contains a 21S rRNA (21S mt-rRNA) and at least 45 different proteins.

It localises to the mitochondrion. Its function is as follows. Component of the mitochondrial ribosome (mitoribosome), a dedicated translation machinery responsible for the synthesis of mitochondrial genome-encoded proteins, including at least some of the essential transmembrane subunits of the mitochondrial respiratory chain. The mitoribosomes are attached to the mitochondrial inner membrane and translation products are cotranslationally integrated into the membrane. The polypeptide is Large ribosomal subunit protein mL58 (mrpl20) (Schizosaccharomyces pombe (strain 972 / ATCC 24843) (Fission yeast)).